Reading from the N-terminus, the 216-residue chain is Phosphoenolpyruvate guanylyltransferase (216 aa).

Phosphoenolpyruvate-binding residues include Thr-139, Gly-155, and Ser-158.

Belongs to the CofC family.

The catalysed reaction is phosphoenolpyruvate + GTP + H(+) = enolpyruvoyl-2-diphospho-5'-guanosine + diphosphate. It participates in cofactor biosynthesis; coenzyme F420 biosynthesis. In terms of biological role, guanylyltransferase that catalyzes the activation of phosphoenolpyruvate (PEP) as enolpyruvoyl-2-diphospho-5'-guanosine, via the condensation of PEP with GTP. It is involved in the biosynthesis of coenzyme F420, a hydride carrier cofactor. The polypeptide is Phosphoenolpyruvate guanylyltransferase (Streptomyces avermitilis (strain ATCC 31267 / DSM 46492 / JCM 5070 / NBRC 14893 / NCIMB 12804 / NRRL 8165 / MA-4680)).